A 273-amino-acid polypeptide reads, in one-letter code: 3-methyl-2-oxobutanoate hydroxymethyltransferase (273 aa).

Mg(2+) is bound by residues aspartate 53 and aspartate 92. 3-methyl-2-oxobutanoate-binding positions include 53–54, aspartate 92, and lysine 122; that span reads DS. Glutamate 124 is a Mg(2+) binding site. Glutamate 191 functions as the Proton acceptor in the catalytic mechanism.

Belongs to the PanB family. In terms of assembly, homodecamer; pentamer of dimers. Mg(2+) serves as cofactor.

It is found in the cytoplasm. It carries out the reaction 3-methyl-2-oxobutanoate + (6R)-5,10-methylene-5,6,7,8-tetrahydrofolate + H2O = 2-dehydropantoate + (6S)-5,6,7,8-tetrahydrofolate. It functions in the pathway cofactor biosynthesis; (R)-pantothenate biosynthesis; (R)-pantoate from 3-methyl-2-oxobutanoate: step 1/2. Functionally, catalyzes the reversible reaction in which hydroxymethyl group from 5,10-methylenetetrahydrofolate is transferred onto alpha-ketoisovalerate to form ketopantoate. The sequence is that of 3-methyl-2-oxobutanoate hydroxymethyltransferase from Bacteroides fragilis (strain ATCC 25285 / DSM 2151 / CCUG 4856 / JCM 11019 / LMG 10263 / NCTC 9343 / Onslow / VPI 2553 / EN-2).